We begin with the raw amino-acid sequence, 691 residues long: DNA ligase (691 aa).

Residues 56–60, 104–105, and glutamate 139 each bind NAD(+); these read DRAYD and SI. Lysine 141 (N6-AMP-lysine intermediate) is an active-site residue. Residues arginine 162, glutamate 198, lysine 314, and lysine 338 each contribute to the NAD(+) site. Zn(2+) contacts are provided by cysteine 429, cysteine 432, cysteine 445, and cysteine 451. One can recognise a BRCT domain in the interval 607 to 691; sequence TAGDALSGQT…SLLESHGIEI (85 aa).

The protein belongs to the NAD-dependent DNA ligase family. LigA subfamily. The cofactor is Mg(2+). It depends on Mn(2+) as a cofactor.

The catalysed reaction is NAD(+) + (deoxyribonucleotide)n-3'-hydroxyl + 5'-phospho-(deoxyribonucleotide)m = (deoxyribonucleotide)n+m + AMP + beta-nicotinamide D-nucleotide.. Its function is as follows. DNA ligase that catalyzes the formation of phosphodiester linkages between 5'-phosphoryl and 3'-hydroxyl groups in double-stranded DNA using NAD as a coenzyme and as the energy source for the reaction. It is essential for DNA replication and repair of damaged DNA. The chain is DNA ligase from Natronomonas pharaonis (strain ATCC 35678 / DSM 2160 / CIP 103997 / JCM 8858 / NBRC 14720 / NCIMB 2260 / Gabara) (Halobacterium pharaonis).